The primary structure comprises 213 residues: Ribulose-phosphate 3-epimerase (213 aa).

Serine 9 lines the substrate pocket. A divalent metal cation-binding residues include histidine 34, aspartate 36, and histidine 66. The Proton acceptor role is filled by aspartate 36. Residues histidine 66, 139–142 (GFGG), 166–168 (DGG), and 186–187 (GS) contribute to the substrate site. Aspartate 166 serves as a coordination point for a divalent metal cation. Aspartate 166 acts as the Proton donor in catalysis.

Belongs to the ribulose-phosphate 3-epimerase family. Requires Co(2+) as cofactor. Fe(2+) serves as cofactor. It depends on Mn(2+) as a cofactor. The cofactor is Zn(2+).

The enzyme catalyses D-ribulose 5-phosphate = D-xylulose 5-phosphate. Its pathway is carbohydrate degradation; pentose phosphate pathway; D-xylulose 5-phosphate from D-ribulose 5-phosphate (non-oxidative stage): step 1/1. Catalyzes the reversible epimerization of D-ribulose 5-phosphate to D-xylulose 5-phosphate. This Encephalitozoon cuniculi (strain GB-M1) (Microsporidian parasite) protein is Ribulose-phosphate 3-epimerase (RPE1).